An 835-amino-acid chain; its full sequence is MNQIEQKWQYIWQEEKAFEVSNASSKPKYYVLEMLPYPSGKIHVGHVRNYSIGDVIARFMTMQGFNVLHPMGWDAFGLPAENAAINNNSHPKKWTYSNIKNMKKQLKSMGFSYDWSREINSCDPEYYKHEQKFFLELYERNLAYQKESFVNWDPVDNTVLANEQVVDGRGWRSGAIVAKRYLKQWFLKITDYAEELLNEIQNLKEWPEAVRSMQEKWIGKSIGANFHFKIKDNEETTIEVFSTKPETIFGASFIGIAFNHPIIERLVSKTPEILAFITQCSHITRSSKLEKAEKEGVFTGLFVTHPFDSNIVLPVIITNFVLMDYGTGAIFGCPAHDECDHELAVKMNLSIKQVIKADMDVQKTAYTEDGILINSDFLNGLTSNEAKQEVIREFEKLGIGKRSVNYRLKDWGISRQRFWGCPIPMIHCEICGIVPVPYKDLPVTLPDDVNFDGHGNPLDHHPSWKHVNCPKCDKPAVRETDTFDTFFESSWYFMRYCNSNATEMTDKKACDYWLPVDKYIGGIEHAVMHLLYARFFTKVMNEQNYVSVQEPFKGLFTQGMVLHATYKDEHNNWLYPEEVVKKGNEFFHKESNNRVVQGRIEKMSKSKKNLIDLETMQEQYGADAIRLFVLSDSPPEKDLEWSASGIEGCSRFINKLEYMFKAIDSLKDDVNSEVNKELNRLVHFTIKHVAEDIKHFALNRAIARMRELSNSISAEISKDKIDVKTVRHGFNVLVQLLNPFIPHITEEIWQKLGNKERLYNLSFPAFDESMLELDTYIMAVQVNGKLRDTYEFKTSVSEDEIKQVTVSLPKVQKFLEGKEPKKIILVPRKIVNILV.

Positions 36-46 (PYPSGKIHVGH) match the 'HIGH' region motif. The short motif at 602 to 606 (KMSKS) is the 'KMSKS' region element. Residue lysine 605 coordinates ATP.

The protein belongs to the class-I aminoacyl-tRNA synthetase family.

The protein localises to the cytoplasm. It catalyses the reaction tRNA(Leu) + L-leucine + ATP = L-leucyl-tRNA(Leu) + AMP + diphosphate. The sequence is that of Leucine--tRNA ligase from Rickettsia rickettsii (strain Iowa).